The primary structure comprises 154 residues: uncharacterized protein (154 aa).

Residues methionine 1–asparagine 37 form a disordered region. A compositionally biased stretch (low complexity) spans asparagine 12–asparagine 37. A glycan (N-linked (GlcNAc...) asparagine) is linked at asparagine 82. The chain crosses the membrane as a helical span at residues isoleucine 116–alanine 136. A glycan (N-linked (GlcNAc...) asparagine) is linked at asparagine 149.

Its subcellular location is the membrane. This is an uncharacterized protein from Dictyostelium discoideum (Social amoeba).